We begin with the raw amino-acid sequence, 134 residues long: Protein NrdI (134 aa).

The protein belongs to the NrdI family.

Functionally, probably involved in ribonucleotide reductase function. The polypeptide is Protein NrdI (Yersinia enterocolitica serotype O:8 / biotype 1B (strain NCTC 13174 / 8081)).